Reading from the N-terminus, the 426-residue chain is Enolase (426 aa).

Position 162 (Gln162) interacts with (2R)-2-phosphoglycerate. Glu204 functions as the Proton donor in the catalytic mechanism. Mg(2+) contacts are provided by Asp241, Glu284, and Asp311. (2R)-2-phosphoglycerate contacts are provided by Lys336, Arg365, Ser366, and Lys387. The Proton acceptor role is filled by Lys336.

This sequence belongs to the enolase family. In terms of assembly, component of the RNA degradosome, a multiprotein complex involved in RNA processing and mRNA degradation. Mg(2+) is required as a cofactor.

It is found in the cytoplasm. Its subcellular location is the secreted. The protein localises to the cell surface. The catalysed reaction is (2R)-2-phosphoglycerate = phosphoenolpyruvate + H2O. It functions in the pathway carbohydrate degradation; glycolysis; pyruvate from D-glyceraldehyde 3-phosphate: step 4/5. Functionally, catalyzes the reversible conversion of 2-phosphoglycerate (2-PG) into phosphoenolpyruvate (PEP). It is essential for the degradation of carbohydrates via glycolysis. This Thioalkalivibrio sulfidiphilus (strain HL-EbGR7) protein is Enolase.